A 174-amino-acid chain; its full sequence is MSKFVKLHLVRTLNKYKELQKIRVKDVMISGDVIITTPEKTIKEIFDEMIKHNISGMPVVDDRGVMIGFITLREIRKYMTSHPYLNVGEVMLKNPPYTTADEDIITAFEKMIESNKKLDQLPVINTKYPEKILGKLEGIIFMEDIIKLLYENIIKELKTLVSFYNHNTEIKIKY.

CBS domains follow at residues 28-87 and 91-156; these read MISG…YLNV and MLKN…IIKE.

In terms of processing, methylated at an undetermined residue between Ser-2 and Asp-26.

The polypeptide is Methylated protein MJ0556 (Methanocaldococcus jannaschii (strain ATCC 43067 / DSM 2661 / JAL-1 / JCM 10045 / NBRC 100440) (Methanococcus jannaschii)).